Reading from the N-terminus, the 281-residue chain is Probable ABC transporter ATP-binding protein AZC_3926 (281 aa).

A disordered region spans residues 1–38 (MNVLSMFGRNATRETSSPAATAGRYADEGDWEGDDHQP). Positions 45-277 (LAAFGLAKSY…PDVRRLYLGE (233 aa)) constitute an ABC transporter domain. Residue 77–84 (GPNGAGKT) coordinates ATP.

It belongs to the ABC transporter superfamily.

The chain is Probable ABC transporter ATP-binding protein AZC_3926 from Azorhizobium caulinodans (strain ATCC 43989 / DSM 5975 / JCM 20966 / LMG 6465 / NBRC 14845 / NCIMB 13405 / ORS 571).